We begin with the raw amino-acid sequence, 410 residues long: Na(+)-translocating NADH-quinone reductase subunit B (410 aa).

3 helical membrane passes run 56–76 (MMIL…YNVG), 119–139 (LFGA…GGFW), and 159–179 (SILF…ALGI). Thr232 bears the FMN phosphoryl threonine mark. Helical transmembrane passes span 266 to 286 (GSIG…IVFA), 293 to 313 (IIAG…FIGS), 318 to 338 (MFAM…GMLF), 347 to 367 (SFTN…CVLI), and 377 to 397 (GMML…YFVA).

It belongs to the NqrB/RnfD family. As to quaternary structure, composed of six subunits; NqrA, NqrB, NqrC, NqrD, NqrE and NqrF. The cofactor is FMN.

It is found in the cell inner membrane. It catalyses the reaction a ubiquinone + n Na(+)(in) + NADH + H(+) = a ubiquinol + n Na(+)(out) + NAD(+). In terms of biological role, NQR complex catalyzes the reduction of ubiquinone-1 to ubiquinol by two successive reactions, coupled with the transport of Na(+) ions from the cytoplasm to the periplasm. NqrA to NqrE are probably involved in the second step, the conversion of ubisemiquinone to ubiquinol. This chain is Na(+)-translocating NADH-quinone reductase subunit B, found in Neisseria meningitidis serogroup A / serotype 4A (strain DSM 15465 / Z2491).